Consider the following 512-residue polypeptide: Kynurenine 3-monooxygenase (512 aa).

This sequence belongs to the aromatic-ring hydroxylase family. KMO subfamily. It depends on FAD as a cofactor.

The protein localises to the mitochondrion outer membrane. It carries out the reaction L-kynurenine + NADPH + O2 + H(+) = 3-hydroxy-L-kynurenine + NADP(+) + H2O. Its pathway is cofactor biosynthesis; NAD(+) biosynthesis; quinolinate from L-kynurenine: step 1/3. Its function is as follows. Catalyzes the hydroxylation of L-kynurenine (L-Kyn) to form 3-hydroxy-L-kynurenine (L-3OHKyn). Required for synthesis of quinolinic acid. This is Kynurenine 3-monooxygenase (bna4) from Aspergillus clavatus (strain ATCC 1007 / CBS 513.65 / DSM 816 / NCTC 3887 / NRRL 1 / QM 1276 / 107).